The sequence spans 308 residues: Ribosomal RNA large subunit methyltransferase F (308 aa).

It belongs to the methyltransferase superfamily. METTL16/RlmF family.

Its subcellular location is the cytoplasm. It catalyses the reaction adenosine(1618) in 23S rRNA + S-adenosyl-L-methionine = N(6)-methyladenosine(1618) in 23S rRNA + S-adenosyl-L-homocysteine + H(+). Specifically methylates the adenine in position 1618 of 23S rRNA. The chain is Ribosomal RNA large subunit methyltransferase F from Shigella dysenteriae serotype 1 (strain Sd197).